The following is a 121-amino-acid chain: Large ribosomal subunit protein bL21c (121 aa).

The protein belongs to the bacterial ribosomal protein bL21 family. As to quaternary structure, part of the 50S ribosomal subunit.

It is found in the plastid. Its subcellular location is the chloroplast. Its function is as follows. This protein binds to 23S rRNA. The chain is Large ribosomal subunit protein bL21c from Huperzia lucidula (Shining clubmoss).